The primary structure comprises 246 residues: ATP synthase subunit a (246 aa).

Positions 1–3 are cleaved as a propeptide — removed in mature form; the sequence is MFY. 7 consecutive transmembrane segments (helical) span residues 20 to 40, 56 to 76, 82 to 102, 112 to 132, 138 to 158, 176 to 196, and 203 to 223; these read ILTL…SIIF, WGVA…SQIG, FFPL…ISMI, LVAI…LGLY, FFAL…LVLI, ANIL…VNLM, and FIGG…EVGI.

It belongs to the ATPase A chain family. F-type ATPases have 2 components, CF(1) - the catalytic core - and CF(0) - the membrane proton channel. CF(1) has five subunits: alpha(3), beta(3), gamma(1), delta(1), epsilon(1). CF(0) has three main subunits: a, b and c.

The protein resides in the mitochondrion inner membrane. In terms of biological role, mitochondrial membrane ATP synthase (F(1)F(0) ATP synthase or Complex V) produces ATP from ADP in the presence of a proton gradient across the membrane which is generated by electron transport complexes of the respiratory chain. F-type ATPases consist of two structural domains, F(1) - containing the extramembraneous catalytic core and F(0) - containing the membrane proton channel, linked together by a central stalk and a peripheral stalk. During catalysis, ATP synthesis in the catalytic domain of F(1) is coupled via a rotary mechanism of the central stalk subunits to proton translocation. Key component of the proton channel; it may play a direct role in the translocation of protons across the membrane. The polypeptide is ATP synthase subunit a (ATP6) (Candida albicans (strain SC5314 / ATCC MYA-2876) (Yeast)).